A 637-amino-acid polypeptide reads, in one-letter code: ATP-dependent zinc metalloprotease FtsH (637 aa).

Residues 1–6 lie on the Cytoplasmic side of the membrane; the sequence is MNNQGR. A helical transmembrane segment spans residues 7 to 27; sequence SILAWAALFIFVILLFNVFQS. Over 28-103 the chain is Periplasmic; the sequence is DGLLGVRNNI…VVPLETRMNT (76 aa). A helical membrane pass occupies residues 104-124; that stretch reads FLGFLISWFPMLLLIGVWVFF. Residues 125-637 are Cytoplasmic-facing; it reads MRQMHGGGKA…TKAQKENIAS (513 aa). An ATP-binding site is contributed by 195–202; it reads GPPGTGKT. Residue H417 participates in Zn(2+) binding. E418 is a catalytic residue. H421 and D495 together coordinate Zn(2+). Positions 617 to 637 are disordered; the sequence is DKEKLHEKTKTTKAQKENIAS.

In the central section; belongs to the AAA ATPase family. The protein in the C-terminal section; belongs to the peptidase M41 family. Homohexamer. Zn(2+) is required as a cofactor.

Its subcellular location is the cell inner membrane. In terms of biological role, acts as a processive, ATP-dependent zinc metallopeptidase for both cytoplasmic and membrane proteins. Plays a role in the quality control of integral membrane proteins. The sequence is that of ATP-dependent zinc metalloprotease FtsH from Rickettsia typhi (strain ATCC VR-144 / Wilmington).